A 1382-amino-acid polypeptide reads, in one-letter code: Ninein-like protein (1382 aa).

EF-hand domains follow at residues 7–42 and 41–76; these read HYVSQLREVYSSCDTTGTGFLDRQELTQLCLKLHLE and LEQQLPVLLQTLLGNDHFARVNFEEFKEGFVAVLSS. The disordered stretch occupies residues 144–164; it reads ASLESVESPKSDEEAESTKEA. The residue at position 148 (Ser148) is a Phosphoserine. Residues 150–164 are compositionally biased toward basic and acidic residues; it reads ESPKSDEEAESTKEA. EF-hand domains follow at residues 196-231 and 233-268; these read TPESQIRGVWEELGVGSSGHLSEQELAVVCQSVGLQ and LEKEELEDLFNKLDQDGDGKVSLEEFQLGLFSHEPA. Residues Asp246, Asp248, Asp250, Lys252, and Glu257 each coordinate Ca(2+). Coiled coils occupy residues 384–424, 484–579, and 616–699; these read QELS…MDDC, AGLR…WARL, and IETE…QLQD. The KEN box motif lies at 495–497; sequence KEN. The short motif at 633 to 641 is the D-box element; that stretch reads RTQLETKVN. Disordered stretches follow at residues 857–969 and 982–1006; these read PLAW…ASCR and RARSWSRGTQEQASEQQARAEGALE. Residues 991–1004 show a composition bias toward low complexity; sequence QEQASEQQARAEGA. Residues 1046-1375 adopt a coiled-coil conformation; it reads ETKIALEREK…RALNKLVSRI (330 aa).

As to quaternary structure, interacts with gamma-tubulin and TUBGCP4. Interacts with anaphase promoting complex/cyclosome (APC/C). Interacts with CDC20 and FZR1. Isoform 2 interacts with LCA5 and USH2A. Isoform 2 interacts with DZANK1. In terms of processing, phosphorylated by PLK1 which disrupts its centrosome association and interaction with gamma-tubulin. Post-translationally, ubiquitinated by the APC/C complex leading to its degradation. In terms of tissue distribution, expressed in KYSE-150 esophageal carcinoma, HeLa cervical carcinoma and U2OS osteosarcoma cells. Expression is regulated in a cell cycle-dependent manner and peaks during G2/M phase (at protein level). Expressed in fetal heart, skeletal muscle, liver, lung and cochlea, and in adult brain, testis, kidney and retina.

It is found in the cytoplasm. The protein localises to the cytoskeleton. The protein resides in the microtubule organizing center. It localises to the centrosome. Functionally, involved in the microtubule organization in interphase cells. Overexpression induces the fragmentation of the Golgi, and causes lysosomes to disperse toward the cell periphery; it also interferes with mitotic spindle assembly. Involved in vesicle transport in photoreceptor cells. May play a role in ovarian carcinogenesis. The protein is Ninein-like protein (NINL) of Homo sapiens (Human).